Consider the following 458-residue polypeptide: SLIT-ROBO Rho GTPase-activating protein 2B (458 aa).

Residues 22–324 (KEIRAQLTEQ…AVENLDATSD (303 aa)) form the F-BAR domain. Over residues 181-203 (LKEAEKQEEKQIGKSVKQEDRQT) the composition is skewed to basic and acidic residues. Residues 181 to 214 (LKEAEKQEEKQIGKSVKQEDRQTPRSPDSTANVR) are disordered. Residues 362-400 (QSELLQRCQQLQSRLSTLKIENEEVKKTMEATLQTIQDI) adopt a coiled-coil conformation.

As to quaternary structure, may interact with SRGAP2; formation of the heterodimer alters SRGAP2 function.

Its function is as follows. May regulate cell migration and differentiation through interaction with and inhibition of SRGAP2. In contrast to SRGAP2C, it is not able to induce long-lasting changes in synaptic density throughout adulthood. The chain is SLIT-ROBO Rho GTPase-activating protein 2B (SRGAP2B) from Homo sapiens (Human).